The primary structure comprises 124 residues: Late histone H2A.2.1 (124 aa).

The segment covering 1-18 (MSGRGKGAKAKSKAKSRS) has biased composition (basic residues). The disordered stretch occupies residues 1–21 (MSGRGKGAKAKSKAKSRSSRA). Position 2 is an N-acetylserine (S2). Phosphoserine is present on S2. Q104 is modified (N5-methylglutamine). K119 participates in a covalent cross-link: Glycyl lysine isopeptide (Lys-Gly) (interchain with G-Cter in ubiquitin).

The protein belongs to the histone H2A family. The nucleosome is a histone octamer containing two molecules each of H2A, H2B, H3 and H4 assembled in one H3-H4 heterotetramer and two H2A-H2B heterodimers. The octamer wraps approximately 147 bp of DNA. Post-translationally, monoubiquitination of Lys-119 gives a specific tag for epigenetic transcriptional repression. In terms of processing, phosphorylation of Ser-2 directly represses transcription.

The protein resides in the nucleus. The protein localises to the chromosome. Functionally, core component of nucleosome. Nucleosomes wrap and compact DNA into chromatin, limiting DNA accessibility to the cellular machineries which require DNA as a template. Histones thereby play a central role in transcription regulation, DNA repair, DNA replication and chromosomal stability. DNA accessibility is regulated via a complex set of post-translational modifications of histones, also called histone code, and nucleosome remodeling. This is Late histone H2A.2.1 from Psammechinus miliaris (Green sea urchin).